A 430-amino-acid polypeptide reads, in one-letter code: GTPase Obg (430 aa).

An Obg domain is found at methionine 1 to leucine 158. The disordered stretch occupies residues lysine 118–proline 145. One can recognise an OBG-type G domain in the interval alanine 159–glutamate 329. GTP contacts are provided by residues glycine 165–serine 172, phenylalanine 190–lysine 194, aspartate 212–glycine 215, asparagine 282–aspartate 285, and serine 310–isoleucine 312. Mg(2+) is bound by residues serine 172 and threonine 192. Residues lysine 352–glutamate 430 enclose the OCT domain.

Belongs to the TRAFAC class OBG-HflX-like GTPase superfamily. OBG GTPase family. As to quaternary structure, monomer. Requires Mg(2+) as cofactor.

Its subcellular location is the cytoplasm. An essential GTPase which binds GTP, GDP and possibly (p)ppGpp with moderate affinity, with high nucleotide exchange rates and a fairly low GTP hydrolysis rate. Plays a role in control of the cell cycle, stress response, ribosome biogenesis and in those bacteria that undergo differentiation, in morphogenesis control. The chain is GTPase Obg from Staphylococcus aureus (strain bovine RF122 / ET3-1).